An 87-amino-acid chain; its full sequence is Mu-conotoxin cal12b (87 aa).

An N-terminal signal peptide occupies residues 1 to 19; that stretch reads MKLTCVLVVLLLLLPYGDL. A propeptide spanning residues 20-42 is cleaved from the precursor; the sequence is ITNNYIRGAARKVTPWRRNLKTR. 4 cysteine pairs are disulfide-bonded: cysteine 45/cysteine 58, cysteine 53/cysteine 70, cysteine 60/cysteine 75, and cysteine 69/cysteine 81. Tryptophan 59 is modified (6'-bromotryptophan). 4-hydroxyproline is present on proline 65. 2 positions are modified to 6'-bromotryptophan: tryptophan 79 and tryptophan 80. A 4-hydroxyproline modification is found at proline 82. A 6'-bromotryptophan modification is found at tryptophan 86.

Expressed by the venom duct.

The protein localises to the secreted. Functionally, mu-conotoxins block voltage-gated sodium channels. This toxin reversibly blocks voltage-gated sodium channel in cephalopods (tested on squid giant-fiber-lobe neurons) with an inhibitor constant (Ki) of 15 nmol/l, with no alteration in the voltage dependence of sodium conductance or on the kinetics of inactivation. Has no effect on sodium channels of the two gastropod S.luhuanus and A.californica (which are not natural prey). The polypeptide is Mu-conotoxin cal12b (Californiconus californicus (California cone)).